The chain runs to 400 residues: Enoyl-[acyl-carrier-protein] reductase [NADH] (400 aa).

NAD(+)-binding positions include 48–53 (GSSSGY), 74–75 (FE), 111–112 (DA), and 139–140 (LA). Tyr225 provides a ligand contact to substrate. Tyr235 serves as the catalytic Proton donor. NAD(+) is bound by residues Lys244 and 273-275 (VVT).

The protein belongs to the TER reductase family. Monomer.

The catalysed reaction is a 2,3-saturated acyl-[ACP] + NAD(+) = a (2E)-enoyl-[ACP] + NADH + H(+). It functions in the pathway lipid metabolism; fatty acid biosynthesis. In terms of biological role, involved in the final reduction of the elongation cycle of fatty acid synthesis (FAS II). Catalyzes the reduction of a carbon-carbon double bond in an enoyl moiety that is covalently linked to an acyl carrier protein (ACP). The chain is Enoyl-[acyl-carrier-protein] reductase [NADH] from Shewanella oneidensis (strain ATCC 700550 / JCM 31522 / CIP 106686 / LMG 19005 / NCIMB 14063 / MR-1).